Consider the following 313-residue polypeptide: Chemotaxis protein CheV2 (313 aa).

The CheW-like domain occupies 16 to 172 (EAQFLCFRLD…VEKMISDVFP (157 aa)). In terms of domain architecture, Response regulatory spans 193 to 313 (LILIAEDSLS…IHEMLKKTLS (121 aa)). Position 246 is a 4-aspartylphosphate (Asp-246).

In terms of processing, phosphorylated; probably by transfer of CheAY phosphate group.

Plays a role in chemotaxis signal transduction system in order to colonize the host stomach. May act as a phosphate sink to control the flow of phosphate to CheAY. This is Chemotaxis protein CheV2 from Helicobacter pylori (strain ATCC 700392 / 26695) (Campylobacter pylori).